Consider the following 387-residue polypeptide: MDLFEYQAKELFAKHNVPTTPGRVTESAEDAKAIAEEIGKPVMVKAQVKVGGRGKAGGVKYAATPEDALTHAQNILGLDIKGHIVKKLLVAEASDIAEEYYISFLLDRANRTYLAMCSVEGGMEIEEVAATKPERLAKVPVDAVKGVDEAFAREIAEKGHLPAEVLDAAAVTIAKLWEVFVKEDATLVEVNPLVRTPDDQILALDGKVTLDANADFRQPGHAEFEDKDATDPLELKAKENDLNYVKLDGAVGIIGNGAGLVMSTLDVVAYAGEKHGGVKPANFLDIGGGASAEVMAAGLDVILNDSQVKSVFVNVFGGITACDAVANGIVKALEILGDEANKPLVVRLDGNNVEEGRRILSEANHPLVIQADTMDSGADKAAELANK.

In terms of domain architecture, ATP-grasp spans 9–236 (KELFAKHNVP…KDATDPLELK (228 aa)). Residues lysine 45, 52-54 (GRG), serine 94, and glutamate 99 contribute to the ATP site. 2 residues coordinate Mg(2+): asparagine 191 and aspartate 205. Substrate contacts are provided by residues asparagine 256 and 318 to 320 (GIT).

This sequence belongs to the succinate/malate CoA ligase beta subunit family. In terms of assembly, heterotetramer of two alpha and two beta subunits. Mg(2+) is required as a cofactor.

It catalyses the reaction succinate + ATP + CoA = succinyl-CoA + ADP + phosphate. The enzyme catalyses GTP + succinate + CoA = succinyl-CoA + GDP + phosphate. It participates in carbohydrate metabolism; tricarboxylic acid cycle; succinate from succinyl-CoA (ligase route): step 1/1. Its function is as follows. Succinyl-CoA synthetase functions in the citric acid cycle (TCA), coupling the hydrolysis of succinyl-CoA to the synthesis of either ATP or GTP and thus represents the only step of substrate-level phosphorylation in the TCA. The beta subunit provides nucleotide specificity of the enzyme and binds the substrate succinate, while the binding sites for coenzyme A and phosphate are found in the alpha subunit. This chain is Succinate--CoA ligase [ADP-forming] subunit beta, found in Mycolicibacterium vanbaalenii (strain DSM 7251 / JCM 13017 / BCRC 16820 / KCTC 9966 / NRRL B-24157 / PYR-1) (Mycobacterium vanbaalenii).